A 303-amino-acid polypeptide reads, in one-letter code: Glutamyl-Q tRNA(Asp) synthetase (303 aa).

Residues 9-13 and glutamate 45 contribute to the L-glutamate site; that span reads RFAPS. The 'HIGH' region signature appears at 12–22; sequence PSPTGAMHLGN. Zn(2+)-binding residues include cysteine 100, cysteine 102, tyrosine 125, and cysteine 129. 2 residues coordinate L-glutamate: tyrosine 184 and arginine 202. The 'KMSKS' region signature appears at 240–244; it reads RLAKR. Residue lysine 243 coordinates ATP.

This sequence belongs to the class-I aminoacyl-tRNA synthetase family. GluQ subfamily. Zn(2+) serves as cofactor.

Its function is as follows. Catalyzes the tRNA-independent activation of glutamate in presence of ATP and the subsequent transfer of glutamate onto a tRNA(Asp). Glutamate is transferred on the 2-amino-5-(4,5-dihydroxy-2-cyclopenten-1-yl) moiety of the queuosine in the wobble position of the QUC anticodon. This chain is Glutamyl-Q tRNA(Asp) synthetase, found in Deinococcus geothermalis (strain DSM 11300 / CIP 105573 / AG-3a).